We begin with the raw amino-acid sequence, 238 residues long: CFA/I fimbrial subunit A (238 aa).

The first 19 residues, 1–19 (MHKLFYLLSLLMAPFVANA), serve as a signal peptide directing secretion.

Its subcellular location is the fimbrium. In terms of biological role, might function as a shuttle protein in the transport of fimbria through the periplasmic space or might function as an adhesin. The chain is CFA/I fimbrial subunit A (cfaA) from Escherichia coli.